The sequence spans 334 residues: GTPase Obg (334 aa).

The region spanning 4-162 (FDFIDEVKKY…GWIKLELKLL (159 aa)) is the Obg domain. Residues 163-330 (AEVGLVGFPN…FKDKIWKLLH (168 aa)) form the OBG-type G domain. GTP contacts are provided by residues 169–176 (GFPNAGKS), 194–198 (FTTLV), 216–219 (DMPG), 284–287 (SKLD), and 311–313 (SSV). 2 residues coordinate Mg(2+): serine 176 and threonine 196.

Belongs to the TRAFAC class OBG-HflX-like GTPase superfamily. OBG GTPase family. Monomer. It depends on Mg(2+) as a cofactor.

Its subcellular location is the cytoplasm. In terms of biological role, an essential GTPase which binds GTP, GDP and possibly (p)ppGpp with moderate affinity, with high nucleotide exchange rates and a fairly low GTP hydrolysis rate. Plays a role in control of the cell cycle, stress response, ribosome biogenesis and in those bacteria that undergo differentiation, in morphogenesis control. The chain is GTPase Obg from Amoebophilus asiaticus (strain 5a2).